The sequence spans 390 residues: 3-ketoacyl-CoA thiolase (390 aa).

The Acyl-thioester intermediate role is filled by Cys-95. Residues His-346 and Cys-376 each act as proton acceptor in the active site.

Belongs to the thiolase-like superfamily. Thiolase family. As to quaternary structure, heterotetramer of two alpha chains (FadB) and two beta chains (FadA).

It is found in the cytoplasm. It catalyses the reaction an acyl-CoA + acetyl-CoA = a 3-oxoacyl-CoA + CoA. The protein operates within lipid metabolism; fatty acid beta-oxidation. Functionally, catalyzes the final step of fatty acid oxidation in which acetyl-CoA is released and the CoA ester of a fatty acid two carbons shorter is formed. This is 3-ketoacyl-CoA thiolase from Acinetobacter baumannii (strain AB307-0294).